The chain runs to 335 residues: tRNA N6-adenosine threonylcarbamoyltransferase (335 aa).

Fe cation is bound by residues His-111, His-115, and Tyr-132. Substrate contacts are provided by residues 132–136, Asp-164, Gly-177, Glu-181, and Asn-260; that span reads YVSGG. Asp-288 serves as a coordination point for Fe cation.

It belongs to the KAE1 / TsaD family. Monomer. Component of the KEOPS complex that consists of Kae1, Bud32, Cgi121 and Pcc1; the whole complex dimerizes. Fe(2+) is required as a cofactor.

The protein resides in the cytoplasm. The enzyme catalyses L-threonylcarbamoyladenylate + adenosine(37) in tRNA = N(6)-L-threonylcarbamoyladenosine(37) in tRNA + AMP + H(+). In terms of biological role, required for the formation of a threonylcarbamoyl group on adenosine at position 37 (t(6)A37) in tRNAs that read codons beginning with adenine. Is a component of the KEOPS complex that is probably involved in the transfer of the threonylcarbamoyl moiety of threonylcarbamoyl-AMP (TC-AMP) to the N6 group of A37. Kae1 likely plays a direct catalytic role in this reaction, but requires other protein(s) of the complex to fulfill this activity. This Methanococcoides burtonii (strain DSM 6242 / NBRC 107633 / OCM 468 / ACE-M) protein is tRNA N6-adenosine threonylcarbamoyltransferase.